A 126-amino-acid chain; its full sequence is Large ribosomal subunit protein eL32 (126 aa).

Belongs to the eukaryotic ribosomal protein eL32 family. Part of the 50S ribosomal subunit.

The sequence is that of Large ribosomal subunit protein eL32 (rpl32e) from Thermococcus kodakarensis (strain ATCC BAA-918 / JCM 12380 / KOD1) (Pyrococcus kodakaraensis (strain KOD1)).